Consider the following 227-residue polypeptide: Ras-related protein Rab-3C (227 aa).

GTP is bound by residues Ser39, Gly42, Lys43, Thr44, Ser45, Thr56, Ser57, Ser61, and Thr62. Residue Thr44 participates in Mg(2+) binding. Positions 53 to 66 (DSFTSAFVSTVGID) match the Switch 1 motif. Residues Thr62 and Asp85 each coordinate Mg(2+). Thr86 bears the Phosphothreonine; by LRRK2 mark. The Switch 2 motif lies at 86–104 (TAGQERYRTITTAYYRGAM). 6 residues coordinate GTP: Gly88, Asn143, Lys144, Asp146, Ala174, and Lys175. 2 positions are modified to phosphoserine: Ser196 and Ser198. The segment at 202–227 (DPAITAAKQSTRLKETPPPPQPNCGC) is disordered. The residue at position 206 (Thr206) is a Phosphothreonine. A compositionally biased stretch (pro residues) spans 217–227 (TPPPPQPNCGC). Residues Cys225 and Cys227 are each lipidated (S-geranylgeranyl cysteine). Cys227 is modified (cysteine methyl ester).

The protein belongs to the small GTPase superfamily. Rab family. Interacts with RIMS1, RIMS2, RPH3A and RPH3AL. Interacts with GDI2, CHM and CHML; phosphorylation at Thr-86 disrupts these interactions. Interacts with MADD (via uDENN domain); the GTP-bound form is preferred for interaction. Requires Mg(2+) as cofactor. Post-translationally, phosphorylation of Thr-86 in the switch II region by LRRK2 prevents the association of RAB regulatory proteins, including CHM, CHML and RAB GDP dissociation inhibitor GDI2.

Its subcellular location is the cell membrane. It carries out the reaction GTP + H2O = GDP + phosphate + H(+). Its activity is regulated as follows. Regulated by guanine nucleotide exchange factors (GEFs) which promote the exchange of bound GDP for free GTP. Regulated by GTPase activating proteins (GAPs) which increase the GTP hydrolysis activity. Inhibited by GDP dissociation inhibitors (GDIs) which prevent Rab-GDP dissociation. In terms of biological role, the small GTPases Rab are key regulators of intracellular membrane trafficking, from the formation of transport vesicles to their fusion with membranes. Rabs cycle between an inactive GDP-bound form and an active GTP-bound form that is able to recruit to membranes different sets of downstream effectors directly responsible for vesicle formation, movement, tethering and fusion. This Mus musculus (Mouse) protein is Ras-related protein Rab-3C.